We begin with the raw amino-acid sequence, 113 residues long: Putative membrane protein insertion efficiency factor (113 aa).

The protein belongs to the UPF0161 family.

It localises to the cell inner membrane. In terms of biological role, could be involved in insertion of integral membrane proteins into the membrane. This Campylobacter concisus (strain 13826) protein is Putative membrane protein insertion efficiency factor.